Consider the following 144-residue polypeptide: Peptide methionine sulfoxide reductase MsrB (144 aa).

The MsrB domain maps to 5-127; sequence KEEKIKSLNR…NSAALRFIPK (123 aa). The Nucleophile role is filled by cysteine 116.

The protein belongs to the MsrB Met sulfoxide reductase family.

It carries out the reaction L-methionyl-[protein] + [thioredoxin]-disulfide + H2O = L-methionyl-(R)-S-oxide-[protein] + [thioredoxin]-dithiol. This is Peptide methionine sulfoxide reductase MsrB from Bacillus velezensis (strain DSM 23117 / BGSC 10A6 / LMG 26770 / FZB42) (Bacillus amyloliquefaciens subsp. plantarum).